A 165-amino-acid polypeptide reads, in one-letter code: Biosynthetic peptidoglycan transglycosylase (165 aa).

It belongs to the glycosyltransferase 51 family.

It localises to the cell inner membrane. It catalyses the reaction [GlcNAc-(1-&gt;4)-Mur2Ac(oyl-L-Ala-gamma-D-Glu-L-Lys-D-Ala-D-Ala)](n)-di-trans,octa-cis-undecaprenyl diphosphate + beta-D-GlcNAc-(1-&gt;4)-Mur2Ac(oyl-L-Ala-gamma-D-Glu-L-Lys-D-Ala-D-Ala)-di-trans,octa-cis-undecaprenyl diphosphate = [GlcNAc-(1-&gt;4)-Mur2Ac(oyl-L-Ala-gamma-D-Glu-L-Lys-D-Ala-D-Ala)](n+1)-di-trans,octa-cis-undecaprenyl diphosphate + di-trans,octa-cis-undecaprenyl diphosphate + H(+). Its pathway is cell wall biogenesis; peptidoglycan biosynthesis. Its function is as follows. Peptidoglycan polymerase that catalyzes glycan chain elongation from lipid-linked precursors. This Neisseria meningitidis protein is Biosynthetic peptidoglycan transglycosylase.